Reading from the N-terminus, the 242-residue chain is Venom nerve growth factor 1 (242 aa).

Positions 1–18 (MSMLCYTLIIAFLIGIWA) are cleaved as a signal peptide. Residues 19 to 125 (APKSEDNVPL…ALNRNIRSKR (107 aa)) constitute a propeptide that is removed on maturation. Positions 26–69 (VPLGSPATSDLSDTSCAQTHKALKTSRNTDQRHPAPKKAEDQEL) are disordered. Over residues 31–43 (PATSDLSDTSCAQ) the composition is skewed to polar residues. A compositionally biased stretch (basic and acidic residues) spans 52 to 66 (RNTDQRHPAPKKAED). Intrachain disulfides connect C139–C203, C181–C231, and C191–C233. N147 carries an N-linked (GlcNAc...) asparagine glycan.

It belongs to the NGF-beta family. In terms of assembly, homodimer; non-covalently linked. As to expression, expressed by the venom gland.

Its subcellular location is the secreted. In terms of biological role, nerve growth factor is important for the development and maintenance of the sympathetic and sensory nervous systems. It stimulates division and differentiation of sympathetic and embryonic sensory neurons as well as basal forebrain cholinergic neurons in the brain. Its relevance in the snake venom is not clear. However, it has been shown to inhibit metalloproteinase-dependent proteolysis of platelet glycoprotein Ib alpha, suggesting a metalloproteinase inhibition to prevent metalloprotease autodigestion and/or protection against prey proteases. Binds a lipid between the two protein chains in the homodimer. The lipid-bound form promotes histamine relase from mouse mast cells, contrary to the lipid-free form. The sequence is that of Venom nerve growth factor 1 from Demansia vestigiata (Lesser black whip snake).